The following is a 469-amino-acid chain: UDP-N-acetylmuramate--L-alanine ligase (469 aa).

Position 122 to 128 (122 to 128 (GTHGKTT)) interacts with ATP.

This sequence belongs to the MurCDEF family.

It localises to the cytoplasm. The catalysed reaction is UDP-N-acetyl-alpha-D-muramate + L-alanine + ATP = UDP-N-acetyl-alpha-D-muramoyl-L-alanine + ADP + phosphate + H(+). Its pathway is cell wall biogenesis; peptidoglycan biosynthesis. In terms of biological role, cell wall formation. This chain is UDP-N-acetylmuramate--L-alanine ligase, found in Legionella pneumophila (strain Paris).